Here is a 135-residue protein sequence, read N- to C-terminus: Photosystem II extrinsic protein U (135 aa).

A signal peptide spans 1 to 26 (MKNLVRLLAVIALIIGSFWGKVPAQA).

The protein belongs to the PsbU family. In terms of assembly, PSII is composed of 1 copy each of membrane proteins PsbA, PsbB, PsbC, PsbD, PsbE, PsbF, PsbH, PsbI, PsbJ, PsbK, PsbL, PsbM, PsbT, PsbX, PsbY, PsbZ, Psb30/Ycf12, peripheral proteins PsbO, CyanoQ (PsbQ), PsbU, PsbV and a large number of cofactors. It forms dimeric complexes.

Its subcellular location is the cellular thylakoid membrane. One of the extrinsic, lumenal subunits of photosystem II (PSII). PSII is a light-driven water plastoquinone oxidoreductase, using light energy to abstract electrons from H(2)O, generating a proton gradient subsequently used for ATP formation. The extrinsic proteins stabilize the structure of photosystem II oxygen-evolving complex (OEC), the ion environment of oxygen evolution and protect the OEC against heat-induced inactivation. In Microcystis aeruginosa (strain NIES-843 / IAM M-2473), this protein is Photosystem II extrinsic protein U.